We begin with the raw amino-acid sequence, 193 residues long: Allatostatin A (193 aa).

Residues 1–25 form the signal peptide; sequence MKTSSLIAMRLIIFYLLSVVGRSTA. The propeptide occupies 26–64; sequence AVEEAPASSLHIPRLNPLSSNLEYDEPSEKRAYAYISEY. The residue at position 74 (Ile-74) is an Isoleucine amide. Residues 78-84 constitute a propeptide that is removed on maturation; that stretch reads WIDNSED. An isoleucine amide mark is found at Ile-94 and Ile-105. Residues 109-139 constitute a propeptide that is removed on maturation; it reads NSGYRPLGMDFSVDNMDFHSREDNLDDFIDD. Position 150 is an isoleucine amide (Ile-150). Ser-165 is modified (serine amide). Positions 169–193 are excised as a propeptide; it reads LNDVVGPKYLLGLGKGLSENENLIQ.

This sequence belongs to the allatostatin family. As to expression, allatostatins A1, A2 and A3 are expressed in brain, antennal lobes, optical lobes, gnathal ganglia, the retrocerebral complex and thoracic, abdominal and ventral ganglia. Allatostain A4 is expressed in brain (at protein level).

The protein localises to the secreted. May act as a neurotransmitter or neuromodulator. This chain is Allatostatin A, found in Camponotus floridanus (Florida carpenter ant).